A 124-amino-acid chain; its full sequence is Fluoride-specific ion channel FluC (124 aa).

A run of 4 helical transmembrane segments spans residues 5 to 27 (LFVALGGSIGAVLRYLISILMLQ), 42 to 62 (ILGSFLMGVVYALGQVSEVSP), 63 to 83 (EIKAFIGVGMLGALTTFSTFS), and 95 to 115 (LVKAILNVVVNVGVCIFVVYL). Gly-74 and Thr-77 together coordinate Na(+).

The protein belongs to the fluoride channel Fluc/FEX (TC 1.A.43) family.

The protein localises to the cell inner membrane. It catalyses the reaction fluoride(in) = fluoride(out). With respect to regulation, na(+) is not transported, but it plays an essential structural role and its presence is essential for fluoride channel function. Its function is as follows. Fluoride-specific ion channel. Important for reducing fluoride concentration in the cell, thus reducing its toxicity. This is Fluoride-specific ion channel FluC from Shewanella piezotolerans (strain WP3 / JCM 13877).